The chain runs to 480 residues: Glycogen synthase (480 aa).

Lys-15 is an ADP-alpha-D-glucose binding site.

Belongs to the glycosyltransferase 1 family. Bacterial/plant glycogen synthase subfamily.

It catalyses the reaction [(1-&gt;4)-alpha-D-glucosyl](n) + ADP-alpha-D-glucose = [(1-&gt;4)-alpha-D-glucosyl](n+1) + ADP + H(+). It participates in glycan biosynthesis; glycogen biosynthesis. Synthesizes alpha-1,4-glucan chains using ADP-glucose. The chain is Glycogen synthase from Clostridioides difficile (strain 630) (Peptoclostridium difficile).